A 293-amino-acid chain; its full sequence is F-box only protein 6 (293 aa).

An F-box domain is found at 10 to 57; that stretch reads LDSINELPENILLELFTHVPARQLLLNCRLVCSLWRDLIDLMTLWKRK. The FBA domain occupies 78-259; it reads FYFLRSLHRN…VTNSSIVVSP (182 aa). The residue at position 258 (Ser258) is a Phosphoserine. Residues 261 to 271 are compositionally biased toward polar residues; the sequence is MTRNQASSEAQ. A disordered region spans residues 261-285; that stretch reads MTRNQASSEAQPGQKHGQEEAAQSP. Residue Ser284 is modified to Phosphoserine.

In terms of assembly, interacts with VCP. Part of a SCF (SKP1-cullin-F-box) protein ligase complex. Interacts with CHEK1 and CUL1.

It is found in the cytoplasm. Its pathway is protein modification; protein ubiquitination. Functionally, substrate-recognition component of some SCF (SKP1-CUL1-F-box protein)-type E3 ubiquitin ligase complexes. Involved in endoplasmic reticulum-associated degradation pathway (ERAD) for misfolded lumenal proteins by recognizing and binding sugar chains on unfolded glycoproteins that are retrotranslocated into the cytosol and promoting their ubiquitination and subsequent degradation. Able to recognize and bind denatured glycoproteins, which are modified with not only high-mannose but also complex-type oligosaccharides. Also recognizes sulfated glycans. Also involved in DNA damage response by specifically recognizing activated CHEK1 (phosphorylated on 'Ser-345'), promoting its ubiquitination and degradation. Ubiquitination of CHEK1 is required to ensure that activated CHEK1 does not accumulate as cells progress through S phase, or when replication forks encounter transient impediments during normal DNA replication. The polypeptide is F-box only protein 6 (FBXO6) (Homo sapiens (Human)).